The following is a 484-amino-acid chain: Protein nucleotidyltransferase YdiU (484 aa).

ATP-binding residues include glycine 81, glycine 83, arginine 84, lysine 103, aspartate 115, glycine 116, arginine 166, and arginine 173. The Proton acceptor role is filled by aspartate 244. Mg(2+) contacts are provided by asparagine 245 and aspartate 254. Aspartate 254 contributes to the ATP binding site.

It belongs to the SELO family. The cofactor is Mg(2+). Mn(2+) serves as cofactor.

The catalysed reaction is L-seryl-[protein] + ATP = 3-O-(5'-adenylyl)-L-seryl-[protein] + diphosphate. It carries out the reaction L-threonyl-[protein] + ATP = 3-O-(5'-adenylyl)-L-threonyl-[protein] + diphosphate. The enzyme catalyses L-tyrosyl-[protein] + ATP = O-(5'-adenylyl)-L-tyrosyl-[protein] + diphosphate. It catalyses the reaction L-histidyl-[protein] + UTP = N(tele)-(5'-uridylyl)-L-histidyl-[protein] + diphosphate. The catalysed reaction is L-seryl-[protein] + UTP = O-(5'-uridylyl)-L-seryl-[protein] + diphosphate. It carries out the reaction L-tyrosyl-[protein] + UTP = O-(5'-uridylyl)-L-tyrosyl-[protein] + diphosphate. In terms of biological role, nucleotidyltransferase involved in the post-translational modification of proteins. It can catalyze the addition of adenosine monophosphate (AMP) or uridine monophosphate (UMP) to a protein, resulting in modifications known as AMPylation and UMPylation. This Shewanella baltica (strain OS195) protein is Protein nucleotidyltransferase YdiU.